The following is a 349-amino-acid chain: T-cell immunoglobulin and mucin domain-containing protein 2 (349 aa).

An N-terminal signal peptide occupies residues 1-20; sequence MVQLQVFISGLLLLLPGAVA. Topologically, residues 21–275 are extracellular; the sequence is SYTVVQGHSV…QKLQRNPTKG (255 aa). In terms of domain architecture, Ig-like V-type spans 22-123; that stretch reads YTVVQGHSVT…AFYFVDYLLE (102 aa). 3 cysteine pairs are disulfide-bonded: C34/C107, C48/C59, and C54/C106. Residues N84 and N89 are each glycosylated (N-linked (GlcNAc...) asparagine). Positions 128–271 are disordered; that stretch reads LPTSPPTRPT…AIPPQKLQRN (144 aa). The span at 136-215 shows a compositional bias: low complexity; the sequence is PTNTGRPTTT…TSTPPTPEQT (80 aa). Residues 222–260 show a composition bias toward polar residues; the sequence is ATTYYPDQTTAEVTEAPSHTPTDWNNTATSSDDSWNSDT. A helical membrane pass occupies residues 276–296; that stretch reads FYVGMSFAALLLLLLASTVAI. Over 297–349 the chain is Cytoplasmic; that stretch reads TRYMVMRKNSGSLRFVAFPVSKIGASQNKVVEQARIEDEVYIIEDSPYFEEES.

The protein belongs to the immunoglobulin superfamily. TIM family. Homodimer.

The protein resides in the cell membrane. In terms of biological role, probable receptor for SEMA4A involved in the regulation of T-cell function. The interaction with SEMA4A enhances T-cell activation. In Rattus norvegicus (Rat), this protein is T-cell immunoglobulin and mucin domain-containing protein 2 (Timd2).